A 627-amino-acid polypeptide reads, in one-letter code: Bromodomain adjacent to zinc finger domain protein 1A (627 aa).

The segment at 222–272 (NARCKVCRKKGDGESMVLCDGCDRGHHIYCVRPKLKYVPEGDWFCPECHPK) adopts a PHD-type zinc-finger fold. A disordered region spans residues 270–503 (HPKQRSHRLP…NRRSSGRHHG (234 aa)). The span at 272–283 (KQRSHRLPSRHR) shows a compositional bias: basic residues. Positions 281 to 327 (RHRYSMDSDEEEEEELDQKEEEEEEEEQEELSESENEQEDEMSEEES) form a coiled coil. A compositionally biased stretch (acidic residues) spans 287 to 326 (DSDEEEEEELDQKEEEEEEEEQEELSESENEQEDEMSEEE). Residues 348-359 (TGKLGPKPKTGK) show a composition bias toward low complexity. Polar residues-rich tracts occupy residues 386 to 395 (EPTSRLSASD) and 402 to 412 (SPNSSLVNVVT). The segment covering 417 to 431 (GRGKGKGRGRGRGRL) has biased composition (basic residues). A compositionally biased stretch (polar residues) spans 486–496 (DISSLEQGNRR). The Bromo domain occupies 502 to 605 (HGVHELSACE…SFFITEAQNL (104 aa)).

The protein belongs to the WAL family. Together with p18 and p20 proteins, it forms the Xenopus version of CHRAC. Post-translationally, phosphorylated in mitosis.

It localises to the nucleus. Functionally, regulatory subunit of a chromatin remodeling complex, which forms ordered nucleosome arrays on chromatin and slides edge- and center-positioned histone octamers away from their original location on the DNA template to facilitate access to DNA during DNA-templated processes such as DNA replication, transcription, and repair. Involved in regulating the spacing of nucleosomes along the chromatin and have the ability to slide mononucleosomes to the center of a DNA template in an ATP-dependent manner. May play a role in transcriptional regulation. This chain is Bromodomain adjacent to zinc finger domain protein 1A (baz1a), found in Xenopus laevis (African clawed frog).